A 411-amino-acid chain; its full sequence is Bifunctional protein GlmU (411 aa).

A pyrophosphorylase region spans residues 1-204 (MDAIILCAGK…NGKLHGIELN (204 aa)). UTP-binding positions include 6–9 (LCAG), Gln-74, and Gly-79. The N-acetyl-alpha-D-glucosamine 1-phosphate site is built by Thr-80, Gly-130, Asn-142, and Asn-158. Residues 205–224 (GYWNDIGHPWDVLSANNRFL) are linker. Residues 225–411 (NKIISKVSGK…DELVITKKRN (187 aa)) are N-acetyltransferase. The active-site Proton acceptor is His-308. Acetyl-CoA is bound by residues Ala-384 and Lys-401.

It in the N-terminal section; belongs to the N-acetylglucosamine-1-phosphate uridyltransferase family. In the C-terminal section; belongs to the transferase hexapeptide repeat family.

It carries out the reaction N-acetyl-alpha-D-glucosamine 1-phosphate + UTP + H(+) = UDP-N-acetyl-alpha-D-glucosamine + diphosphate. It catalyses the reaction alpha-D-glucosamine 1-phosphate + acetyl-CoA = N-acetyl-alpha-D-glucosamine 1-phosphate + CoA + H(+). It functions in the pathway nucleotide-sugar biosynthesis; UDP-N-acetyl-alpha-D-glucosamine biosynthesis; N-acetyl-alpha-D-glucosamine 1-phosphate from alpha-D-glucosamine 6-phosphate (route II): step 2/2. The protein operates within nucleotide-sugar biosynthesis; UDP-N-acetyl-alpha-D-glucosamine biosynthesis; UDP-N-acetyl-alpha-D-glucosamine from N-acetyl-alpha-D-glucosamine 1-phosphate: step 1/1. In terms of biological role, catalyzes the last two sequential reactions in the de novo biosynthetic pathway for UDP-N-acetyl-glucosamine (UDP-GlcNAc). Responsible for the acetylation of GlcN-1-P to GlcNAc-1-P, and for the uridyl transfer from UTP to GlcNAc-1-P, to produce UDP-GlcNAc and pyrophosphate. The protein is Bifunctional protein GlmU of Methanococcus maripaludis (strain C7 / ATCC BAA-1331).